A 131-amino-acid polypeptide reads, in one-letter code: Superoxide dismutase [Ni] (131 aa).

A propeptide spanning residues 1-14 (MLSRLFAPKVKVSA) is cleaved from the precursor. Ni(2+) contacts are provided by His15, Cys16, and Cys20.

This sequence belongs to the nickel superoxide dismutase family. Homohexamer. The hexameric protein has roughly the shape of a hollow sphere with an outer diameter of 72 Angstroms and a large inner cavity. Ni(2+) serves as cofactor.

The protein resides in the cytoplasm. The catalysed reaction is 2 superoxide + 2 H(+) = H2O2 + O2. This chain is Superoxide dismutase [Ni] (sodN), found in Streptomyces seoulensis.